A 78-amino-acid polypeptide reads, in one-letter code: Acyl carrier protein (78 aa).

The region spanning 2–77 (STIEERVKKI…AAIDYVKAHQ (76 aa)) is the Carrier domain. S37 carries the O-(pantetheine 4'-phosphoryl)serine modification.

This sequence belongs to the acyl carrier protein (ACP) family. Post-translationally, 4'-phosphopantetheine is transferred from CoA to a specific serine of apo-ACP by AcpS. This modification is essential for activity because fatty acids are bound in thioester linkage to the sulfhydryl of the prosthetic group.

Its subcellular location is the cytoplasm. The protein operates within lipid metabolism; fatty acid biosynthesis. Carrier of the growing fatty acid chain in fatty acid biosynthesis. In Pseudomonas putida (strain ATCC 700007 / DSM 6899 / JCM 31910 / BCRC 17059 / LMG 24140 / F1), this protein is Acyl carrier protein.